The chain runs to 613 residues: Isocitrate dehydrogenase kinase/phosphatase (613 aa).

ATP is bound by residues 328 to 334 and Lys349; that span reads APGIRGL. The active site involves Asp384.

This sequence belongs to the AceK family.

The protein localises to the cytoplasm. The catalysed reaction is L-seryl-[isocitrate dehydrogenase] + ATP = O-phospho-L-seryl-[isocitrate dehydrogenase] + ADP + H(+). Functionally, bifunctional enzyme which can phosphorylate or dephosphorylate isocitrate dehydrogenase (IDH) on a specific serine residue. This is a regulatory mechanism which enables bacteria to bypass the Krebs cycle via the glyoxylate shunt in response to the source of carbon. When bacteria are grown on glucose, IDH is fully active and unphosphorylated, but when grown on acetate or ethanol, the activity of IDH declines drastically concomitant with its phosphorylation. The chain is Isocitrate dehydrogenase kinase/phosphatase from Cupriavidus necator (strain ATCC 17699 / DSM 428 / KCTC 22496 / NCIMB 10442 / H16 / Stanier 337) (Ralstonia eutropha).